The sequence spans 170 residues: ATP synthase subunit b (170 aa).

The chain crosses the membrane as a helical span at residues 30-50; the sequence is FFFVLAIFLVVLAVIGTFVVP.

It belongs to the ATPase B chain family. In terms of assembly, F-type ATPases have 2 components, F(1) - the catalytic core - and F(0) - the membrane proton channel. F(1) has five subunits: alpha(3), beta(3), gamma(1), delta(1), epsilon(1). F(0) has three main subunits: a(1), b(2) and c(10-14). The alpha and beta chains form an alternating ring which encloses part of the gamma chain. F(1) is attached to F(0) by a central stalk formed by the gamma and epsilon chains, while a peripheral stalk is formed by the delta and b chains.

Its subcellular location is the cell membrane. F(1)F(0) ATP synthase produces ATP from ADP in the presence of a proton or sodium gradient. F-type ATPases consist of two structural domains, F(1) containing the extramembraneous catalytic core and F(0) containing the membrane proton channel, linked together by a central stalk and a peripheral stalk. During catalysis, ATP synthesis in the catalytic domain of F(1) is coupled via a rotary mechanism of the central stalk subunits to proton translocation. Its function is as follows. Component of the F(0) channel, it forms part of the peripheral stalk, linking F(1) to F(0). This chain is ATP synthase subunit b, found in Mycobacterium marinum (strain ATCC BAA-535 / M).